Reading from the N-terminus, the 272-residue chain is Shikimate dehydrogenase (NADP(+)) (272 aa).

Residues 14-16 and threonine 61 contribute to the shikimate site; that span reads SKS. Lysine 65 serves as the catalytic Proton acceptor. Position 77 (glutamate 77) interacts with NADP(+). Residues asparagine 86 and aspartate 102 each coordinate shikimate. Residues 126–130, 149–154, and methionine 213 contribute to the NADP(+) site; these read GAGGA and NRTVSR. Tyrosine 215 contacts shikimate. Glycine 237 provides a ligand contact to NADP(+).

This sequence belongs to the shikimate dehydrogenase family. In terms of assembly, homodimer.

It carries out the reaction shikimate + NADP(+) = 3-dehydroshikimate + NADPH + H(+). It participates in metabolic intermediate biosynthesis; chorismate biosynthesis; chorismate from D-erythrose 4-phosphate and phosphoenolpyruvate: step 4/7. In terms of biological role, involved in the biosynthesis of the chorismate, which leads to the biosynthesis of aromatic amino acids. Catalyzes the reversible NADPH linked reduction of 3-dehydroshikimate (DHSA) to yield shikimate (SA). This chain is Shikimate dehydrogenase (NADP(+)), found in Shigella boydii serotype 18 (strain CDC 3083-94 / BS512).